A 275-amino-acid chain; its full sequence is Epidermal growth factor-like protein 7 (275 aa).

An N-terminal signal peptide occupies residues 1–21 (MWGSGELLVAWFLVLAADGTT). The EMI domain occupies 28–105 (SRRVCTVGIS…TSGLPGACGA (78 aa)). 8 disulfide bridges follow: Cys32–Cys90, Cys57–Cys63, Cys89–Cys103, Cys108–Cys118, Cys112–Cys124, Cys126–Cys135, Cys142–Cys153, and Cys149–Cys162. The 33-residue stretch at 104–136 (GAAICQPPCGNGGSCIRPGHCRCPVGWQGDTCQ) folds into the EGF-like 1 domain. The short motif at 131-133 (QGD) is the Cell attachment site element. The 41-residue stretch at 138-178 (DVDECSTGEASCPQRCVNTVGSYWCQGWEGQSPSADGTRCL) folds into the EGF-like 2; calcium-binding domain. The interval 173 to 193 (DGTRCLSKEGPSPVAPNPTAG) is disordered. Residues 196 to 220 (SMAREEVYRLQARVDVLEQKLQLVL) are a coiled coil.

Interacts with ITGAV/ITGB3 in an RGD-dependent manner, increasing endothelial cell's motility. Expressed specifically by endothelial cells of the highly vascularized organs heart, lung and kidney.

The protein localises to the secreted. It is found in the extracellular space. In terms of biological role, regulates vascular tubulogenesis in vivo. Inhibits platelet-derived growth factor (PDGF)-BB-induced smooth muscle cell migration and promotes endothelial cell adhesion to the extracellular matrix and angiogenesis. The chain is Epidermal growth factor-like protein 7 (Egfl7) from Mus musculus (Mouse).